A 24-amino-acid chain; its full sequence is FLPFIAGVAAKFLPKIFCAISKKC.

Cysteines 18 and 24 form a disulfide.

Expressed by the skin glands.

The protein localises to the secreted. Antibacterial activity against Gram-positive bacterium S.aureus. This chain is Brevinin-1Bc, found in Lithobates berlandieri (Rio Grande leopard frog).